The chain runs to 262 residues: Lectin (262 aa).

The signal sequence occupies residues 1 to 21 (MASSVLLVLSLFLVLLLTQAS). Asn53, Asn82, Asn100, Asn129, and Asn205 each carry an N-linked (GlcNAc...) asparagine glycan.

This sequence belongs to the leguminous lectin family.

This metalloglycoprotein, containing Ca(2+), Mn(2+), binds glycoconjugates containing terminal non-reducing alpha-D-GalNAc residues. This chain is Lectin, found in Phaseolus lunatus (Lima bean).